A 79-amino-acid chain; its full sequence is Dolichol phosphate-mannose biosynthesis regulatory protein (79 aa).

2 helical membrane-spanning segments follow: residues 8-28 and 50-70; these read IGFV…TWVI and IIIP…FLGL.

Belongs to the DPM2 family. Component of the dolichol-phosphate mannose (DPM) synthase complex composed of dpm1, dpm2 and dpm3.

It is found in the endoplasmic reticulum membrane. The protein operates within protein modification; protein glycosylation. Regulates the biosynthesis of dolichol phosphate-mannose. Regulatory subunit of the dolichol-phosphate mannose (DPM) synthase complex; essential for the ER localization and stable expression of dpm1. The polypeptide is Dolichol phosphate-mannose biosynthesis regulatory protein (dpm2-1) (Dictyostelium discoideum (Social amoeba)).